A 295-amino-acid chain; its full sequence is Calcium-regulated actin-bundling protein (295 aa).

Monomer.

May contribute to the structure and reorganization of filopodia and pseudopodia accompanying cell movements. The chain is Calcium-regulated actin-bundling protein (abpB) from Dictyostelium discoideum (Social amoeba).